The primary structure comprises 305 residues: Homoserine O-acetyltransferase (305 aa).

The Acyl-thioester intermediate role is filled by Cys142. Positions 163 and 192 each coordinate substrate. The Proton acceptor role is filled by His235. The active site involves Glu237. Arg249 contributes to the substrate binding site.

The protein belongs to the MetA family.

Its subcellular location is the cytoplasm. It carries out the reaction L-homoserine + acetyl-CoA = O-acetyl-L-homoserine + CoA. Its pathway is amino-acid biosynthesis; L-methionine biosynthesis via de novo pathway; O-acetyl-L-homoserine from L-homoserine: step 1/1. Transfers an acetyl group from acetyl-CoA to L-homoserine, forming acetyl-L-homoserine. In Bacteroides fragilis (strain YCH46), this protein is Homoserine O-acetyltransferase.